The primary structure comprises 144 residues: Small ribosomal subunit protein uS11 (144 aa).

The segment at 123–144 is disordered; the sequence is EDVTPVPTDSTRRKGSRRGRRL. Residues 135 to 144 show a composition bias toward basic residues; the sequence is RKGSRRGRRL.

This sequence belongs to the universal ribosomal protein uS11 family.

The sequence is that of Small ribosomal subunit protein uS11 (RPS14) from Trypanosoma brucei brucei.